The primary structure comprises 139 residues: D-ribose pyranase (139 aa).

His-20 acts as the Proton donor in catalysis. Residues Asp-28, His-106, and 128–130 (YAN) each bind substrate.

Belongs to the RbsD / FucU family. RbsD subfamily. In terms of assembly, homodecamer.

It is found in the cytoplasm. It catalyses the reaction beta-D-ribopyranose = beta-D-ribofuranose. It functions in the pathway carbohydrate metabolism; D-ribose degradation; D-ribose 5-phosphate from beta-D-ribopyranose: step 1/2. Functionally, catalyzes the interconversion of beta-pyran and beta-furan forms of D-ribose. This Shewanella pealeana (strain ATCC 700345 / ANG-SQ1) protein is D-ribose pyranase.